Consider the following 116-residue polypeptide: NADH-ubiquinone oxidoreductase chain 3 (116 aa).

Helical transmembrane passes span phenylalanine 4–tryptophan 24, phenylalanine 56–serine 76, and phenylalanine 87–tryptophan 107.

The protein belongs to the complex I subunit 3 family.

The protein localises to the mitochondrion membrane. The enzyme catalyses a ubiquinone + NADH + 5 H(+)(in) = a ubiquinol + NAD(+) + 4 H(+)(out). Core subunit of the mitochondrial membrane respiratory chain NADH dehydrogenase (Complex I) that is believed to belong to the minimal assembly required for catalysis. Complex I functions in the transfer of electrons from NADH to the respiratory chain. The immediate electron acceptor for the enzyme is believed to be ubiquinone. The protein is NADH-ubiquinone oxidoreductase chain 3 (MT-ND3) of Petromyzon marinus (Sea lamprey).